The sequence spans 176 residues: MIRTKNIFLIGPVGAGKSTIGKQLAKQLKLEFIDSDDTIEKKCGVDINWIFDLEGEEGFRKRERDVIAEILAEKQNIVLATGGGAILDPDTRSLLSSRGKVVYLEATIEQQLERTAKDTKRPLLRVDDKKPVLEQLMAEREPLYRSIADVVVETNGATVKNIVNKISTFLVEETIL.

Residue 14–19 (GAGKST) coordinates ATP. Ser-18 contributes to the Mg(2+) binding site. 3 residues coordinate substrate: Asp-36, Arg-60, and Gly-83. Position 121 (Arg-121) interacts with ATP. Arg-140 serves as a coordination point for substrate.

It belongs to the shikimate kinase family. As to quaternary structure, monomer. Mg(2+) is required as a cofactor.

Its subcellular location is the cytoplasm. The catalysed reaction is shikimate + ATP = 3-phosphoshikimate + ADP + H(+). The protein operates within metabolic intermediate biosynthesis; chorismate biosynthesis; chorismate from D-erythrose 4-phosphate and phosphoenolpyruvate: step 5/7. Functionally, catalyzes the specific phosphorylation of the 3-hydroxyl group of shikimic acid using ATP as a cosubstrate. This Francisella philomiragia subsp. philomiragia (strain ATCC 25017 / CCUG 19701 / FSC 153 / O#319-036) protein is Shikimate kinase.